The chain runs to 402 residues: Serine/threonine transporter SstT (402 aa).

8 helical membrane passes run 17 to 37 (IAIG…ITVI), 44 to 64 (FVGG…ANAL), 79 to 99 (IVLY…SHYI), 138 to 158 (ALSQ…GFAM), 179 to 199 (IVRW…FDTI), 212 to 232 (VLIL…NPII), 295 to 315 (MAGA…TLGI), and 336 to 356 (ASGI…LFGI).

This sequence belongs to the dicarboxylate/amino acid:cation symporter (DAACS) (TC 2.A.23) family.

It localises to the cell membrane. It carries out the reaction L-serine(in) + Na(+)(in) = L-serine(out) + Na(+)(out). The catalysed reaction is L-threonine(in) + Na(+)(in) = L-threonine(out) + Na(+)(out). In terms of biological role, involved in the import of serine and threonine into the cell, with the concomitant import of sodium (symport system). The chain is Serine/threonine transporter SstT from Streptococcus thermophilus (strain ATCC BAA-491 / LMD-9).